The following is a 283-amino-acid chain: NAD kinase (283 aa).

The active-site Proton acceptor is D66. NAD(+) contacts are provided by residues 66-67 (DG), 140-141 (ND), R151, R168, D170, and Q240.

It belongs to the NAD kinase family. Requires a divalent metal cation as cofactor.

It localises to the cytoplasm. It catalyses the reaction NAD(+) + ATP = ADP + NADP(+) + H(+). Involved in the regulation of the intracellular balance of NAD and NADP, and is a key enzyme in the biosynthesis of NADP. Catalyzes specifically the phosphorylation on 2'-hydroxyl of the adenosine moiety of NAD to yield NADP. The protein is NAD kinase of Syntrophobacter fumaroxidans (strain DSM 10017 / MPOB).